The following is a 110-amino-acid chain: IQ domain-containing protein J (110 aa).

Residues 47-67 enclose the IQ domain; that stretch reads ESKVKIIQRAWREYLQRQDPL. Positions 63–99 are disordered; the sequence is RQDPLEKRSPSPPSVSSDKLSSSVSMNTFSDSSTPVS. Residues 76-87 show a composition bias toward low complexity; it reads SVSSDKLSSSVS. Residues 88–99 show a composition bias toward polar residues; the sequence is MNTFSDSSTPVS.

The polypeptide is IQ domain-containing protein J (Mus musculus (Mouse)).